Here is a 677-residue protein sequence, read N- to C-terminus: Methionine--tRNA ligase (677 aa).

The 'HIGH' region motif lies at 15–25 (PYANGSIHLGH). Residues Cys-146, Cys-149, Cys-159, and Cys-162 each contribute to the Zn(2+) site. Positions 333 to 337 (KMSKS) match the 'KMSKS' region motif. Lys-336 is a binding site for ATP. One can recognise a tRNA-binding domain in the interval 575-677 (DFAKVDLRVA…AGAKPGHQVK (103 aa)).

The protein belongs to the class-I aminoacyl-tRNA synthetase family. MetG type 1 subfamily. In terms of assembly, homodimer. The cofactor is Zn(2+).

It is found in the cytoplasm. The enzyme catalyses tRNA(Met) + L-methionine + ATP = L-methionyl-tRNA(Met) + AMP + diphosphate. Is required not only for elongation of protein synthesis but also for the initiation of all mRNA translation through initiator tRNA(fMet) aminoacylation. In Escherichia coli (strain ATCC 8739 / DSM 1576 / NBRC 3972 / NCIMB 8545 / WDCM 00012 / Crooks), this protein is Methionine--tRNA ligase.